The primary structure comprises 298 residues: 4-hydroxybenzoate octaprenyltransferase (298 aa).

7 helical membrane passes run 30 to 50, 54 to 74, 105 to 125, 148 to 168, 218 to 238, 240 to 260, and 275 to 295; these read IGTW…AEGI, GTLL…CVVN, VLFA…NLPT, FPQV…FMAI, DRLM…WVGL, LALG…FVFQ, and AFLN…LSLW.

This sequence belongs to the UbiA prenyltransferase family. It depends on Mg(2+) as a cofactor.

Its subcellular location is the cell inner membrane. The catalysed reaction is all-trans-octaprenyl diphosphate + 4-hydroxybenzoate = 4-hydroxy-3-(all-trans-octaprenyl)benzoate + diphosphate. It functions in the pathway cofactor biosynthesis; ubiquinone biosynthesis. Its function is as follows. Catalyzes the prenylation of para-hydroxybenzoate (PHB) with an all-trans polyprenyl group. Mediates the second step in the final reaction sequence of ubiquinone-8 (UQ-8) biosynthesis, which is the condensation of the polyisoprenoid side chain with PHB, generating the first membrane-bound Q intermediate 3-octaprenyl-4-hydroxybenzoate. The sequence is that of 4-hydroxybenzoate octaprenyltransferase from Chromohalobacter salexigens (strain ATCC BAA-138 / DSM 3043 / CIP 106854 / NCIMB 13768 / 1H11).